Consider the following 406-residue polypeptide: Cysteine desulfurase (406 aa).

An N6-(pyridoxal phosphate)lysine modification is found at lysine 226. Cysteine 364 (cysteine persulfide intermediate) is an active-site residue.

It belongs to the class-V pyridoxal-phosphate-dependent aminotransferase family. Csd subfamily. In terms of assembly, homodimer. Interacts with SufE and the SufBCD complex composed of SufB, SufC and SufD. The interaction with SufE is required to mediate the direct transfer of the sulfur atom from the S-sulfanylcysteine. Pyridoxal 5'-phosphate serves as cofactor.

The protein resides in the cytoplasm. It catalyses the reaction (sulfur carrier)-H + L-cysteine = (sulfur carrier)-SH + L-alanine. It carries out the reaction L-selenocysteine + AH2 = hydrogenselenide + L-alanine + A + H(+). Its pathway is cofactor biosynthesis; iron-sulfur cluster biosynthesis. In terms of biological role, cysteine desulfurases mobilize the sulfur from L-cysteine to yield L-alanine, an essential step in sulfur metabolism for biosynthesis of a variety of sulfur-containing biomolecules. Component of the suf operon, which is activated and required under specific conditions such as oxidative stress and iron limitation. Acts as a potent selenocysteine lyase in vitro, that mobilizes selenium from L-selenocysteine. Selenocysteine lyase activity is however unsure in vivo. This chain is Cysteine desulfurase, found in Escherichia coli O127:H6 (strain E2348/69 / EPEC).